The chain runs to 386 residues: Chaperone protein DnaJ (386 aa).

The J domain maps to 3–68; the sequence is DYYEILEVAR…KKRQVYDRYG (66 aa). The CR-type zinc-finger motif lies at 146 to 224; the sequence is GVDKELVISN…CKGQGAVKEK (79 aa). Positions 159, 162, 176, 179, 198, 201, 212, and 215 each coordinate Zn(2+). CXXCXGXG motif repeat units follow at residues 159–166, 176–183, 198–205, and 212–219; these read CNVCNGKG, CSECKGRG, CPKCHGEG, and CKNCKGQG.

The protein belongs to the DnaJ family. In terms of assembly, homodimer. It depends on Zn(2+) as a cofactor.

The protein resides in the cytoplasm. Its function is as follows. Participates actively in the response to hyperosmotic and heat shock by preventing the aggregation of stress-denatured proteins and by disaggregating proteins, also in an autonomous, DnaK-independent fashion. Unfolded proteins bind initially to DnaJ; upon interaction with the DnaJ-bound protein, DnaK hydrolyzes its bound ATP, resulting in the formation of a stable complex. GrpE releases ADP from DnaK; ATP binding to DnaK triggers the release of the substrate protein, thus completing the reaction cycle. Several rounds of ATP-dependent interactions between DnaJ, DnaK and GrpE are required for fully efficient folding. Also involved, together with DnaK and GrpE, in the DNA replication of plasmids through activation of initiation proteins. The chain is Chaperone protein DnaJ from Protochlamydia amoebophila (strain UWE25).